We begin with the raw amino-acid sequence, 186 residues long: Probable nicotinate-nucleotide adenylyltransferase (186 aa).

Belongs to the NadD family.

It catalyses the reaction nicotinate beta-D-ribonucleotide + ATP + H(+) = deamido-NAD(+) + diphosphate. Its pathway is cofactor biosynthesis; NAD(+) biosynthesis; deamido-NAD(+) from nicotinate D-ribonucleotide: step 1/1. Catalyzes the reversible adenylation of nicotinate mononucleotide (NaMN) to nicotinic acid adenine dinucleotide (NaAD). This Thermus thermophilus (strain ATCC BAA-163 / DSM 7039 / HB27) protein is Probable nicotinate-nucleotide adenylyltransferase.